Here is a 152-residue protein sequence, read N- to C-terminus: Perlwapin (152 aa).

The first 18 residues, 1 to 18 (LILCVVVCTAAVLGTAAG), serve as a signal peptide directing secretion. The WAP 1 domain occupies 19–61 (YESQLPGCPPGAYPAICARYCYSDRDCASGYYCCNTGCLNICV). 12 cysteine pairs are disulfide-bonded: Cys26-Cys52, Cys35-Cys56, Cys39-Cys51, Cys45-Cys60, Cys69-Cys95, Cys77-Cys100, Cys82-Cys94, Cys88-Cys103, Cys112-Cys139, Cys122-Cys142, Cys126-Cys138, and Cys132-Cys146. Residues 62-107 (PKPKPGLCPSITQSPCRGNVCNNDQDCPGNRKCCGKPGCKRCYRPK) enclose the WAP 2; atypical domain. A WAP 3 domain is found at 108 to 150 (KPGSCPARKYEAGPCVVYCDGDFDCPGDKKCCGGCPRLCEKPC).

As to expression, component of the acid-soluble and acid-insoluble organic matrix of prismatic shell layers (at protein level).

It is found in the secreted. Functionally, inhibits growth of calcium carbonate crystals. May inhibit growth of certain crystallographic planes in the mineral phase of nacre in the shell. This chain is Perlwapin, found in Haliotis asinina (Donkey's ear abalone).